We begin with the raw amino-acid sequence, 255 residues long: tRNA pseudouridine synthase A (255 aa).

Catalysis depends on aspartate 52, which acts as the Nucleophile. Tyrosine 111 is a binding site for substrate.

This sequence belongs to the tRNA pseudouridine synthase TruA family. As to quaternary structure, homodimer.

It carries out the reaction uridine(38/39/40) in tRNA = pseudouridine(38/39/40) in tRNA. In terms of biological role, formation of pseudouridine at positions 38, 39 and 40 in the anticodon stem and loop of transfer RNAs. This chain is tRNA pseudouridine synthase A, found in Cereibacter sphaeroides (strain ATCC 17023 / DSM 158 / JCM 6121 / CCUG 31486 / LMG 2827 / NBRC 12203 / NCIMB 8253 / ATH 2.4.1.) (Rhodobacter sphaeroides).